The following is a 77-amino-acid chain: Serine protease inhibitor 3 (77 aa).

The first 17 residues, 1-17 (MMFTPLIVLTLLVLATA), serve as a signal peptide directing secretion. Intrachain disulfides connect Cys-21-Cys-53, Cys-30-Cys-48, Cys-33-Cys-44, and Cys-55-Cys-68. The TIL domain occupies 21–74 (CGPNEQWSGCPKCELQSGESDKPCATICGEPKCYCSPDKYRRIPDGRCIRKIQC).

The protein resides in the secreted. Defends the organism against the host's proteinases. This chain is Serine protease inhibitor 3, found in Anisakis simplex (Herring worm).